A 155-amino-acid chain; its full sequence is Ribosome maturation factor RimP (155 aa).

It belongs to the RimP family.

It is found in the cytoplasm. Required for maturation of 30S ribosomal subunits. This Synechococcus sp. (strain WH7803) protein is Ribosome maturation factor RimP.